We begin with the raw amino-acid sequence, 462 residues long: Kinetochore protein Nuf2-A (462 aa).

Coiled-coil stretches lie at residues 143-277 (SSYK…DKCD) and 308-461 (EIHR…RLSR). The tract at residues 239–259 (RMKSQIVESPEQRKSKTERMK) is disordered. The span at 248-259 (PEQRKSKTERMK) shows a compositional bias: basic and acidic residues.

It belongs to the NUF2 family. In terms of assembly, component of the NDC80 complex, which is composed of ndc80, cdca1, spbc24 and spbc25. The NDC80 complex interacts with mis12 and zwint.

The protein localises to the nucleus. Its subcellular location is the chromosome. The protein resides in the centromere. It localises to the kinetochore. Functionally, acts as a component of the essential kinetochore-associated NDC80 complex, which is required for chromosome segregation and spindle checkpoint activity. Required for kinetochore integrity and the organization of stable microtubule binding sites in the outer plate of the kinetochore. The NDC80 complex synergistically enhances the affinity of the SKA1 complex for microtubules and may allow the NDC80 complex to track depolymerizing microtubules. In Xenopus laevis (African clawed frog), this protein is Kinetochore protein Nuf2-A (nuf2-a).